A 104-amino-acid chain; its full sequence is Synaptic plasticity regulator PANTS (104 aa).

The tract at residues 58–104 (RRSAEAQADSLPPGPEGEPRVAGAGPNAVTGILTRNQGTERPHGDTR) is disordered. The segment covering 95–104 (GTERPHGDTR) has biased composition (basic and acidic residues).

Belongs to the UPF0545 family. Interacts with RTN4 isoform A/Nogo-A; the interaction results in enhanced RTN4-mediated inhibition of AMPA receptor clustering. Also interacts with NCAM1, RANBP2 and CCT8. Post-translationally, rapidly degraded by proteolysis following neuronal stimulation, resulting in increased AMPA receptor clustering.

Its subcellular location is the synapse. It is found in the synaptic cleft. Its function is as follows. Negatively regulates long-term potentiation and modulates adult synaptic plasticity. Stabilizes the interaction of RTN4 isoform A/Nogo-A with its receptors, inhibiting clustering of postsynaptic AMPA receptors at synaptic sites. Upon neuronal stimulation, degraded at synapses, reducing RTN4 signaling and allowing AMPA receptor clustering at individual synapses. In Bos taurus (Bovine), this protein is Synaptic plasticity regulator PANTS.